The primary structure comprises 269 residues: Imidazoleglycerol-phosphate dehydratase 2, chloroplastic (269 aa).

Residues 1 to 51 (MTTAPFLFPSLSRLHSARASSFPKPPVGSGAGVAFPARPYGSSLRLRSSVM) constitute a chloroplast transit peptide. Substrate-binding positions include Glu-83, 109–117 (HMLDQLASH), 135–139 (HHSNE), Arg-161, and Arg-183. His-109, His-135, His-136, and Glu-139 together coordinate Mn(2+). Positions 207, 231, 232, and 235 each coordinate Mn(2+). Residues 231–239 (HHIIEATFK) and 261–263 (SSK) contribute to the substrate site.

Belongs to the imidazoleglycerol-phosphate dehydratase family. Mn(2+) is required as a cofactor.

It localises to the plastid. Its subcellular location is the chloroplast. The catalysed reaction is D-erythro-1-(imidazol-4-yl)glycerol 3-phosphate = 3-(imidazol-4-yl)-2-oxopropyl phosphate + H2O. It functions in the pathway amino-acid biosynthesis; L-histidine biosynthesis; L-histidine from 5-phospho-alpha-D-ribose 1-diphosphate: step 6/9. The chain is Imidazoleglycerol-phosphate dehydratase 2, chloroplastic from Triticum aestivum (Wheat).